Reading from the N-terminus, the 290-residue chain is Acetylglutamate kinase (290 aa).

Substrate is bound by residues 60-61 (GG), R82, and N187.

Belongs to the acetylglutamate kinase family. ArgB subfamily.

The protein localises to the cytoplasm. It carries out the reaction N-acetyl-L-glutamate + ATP = N-acetyl-L-glutamyl 5-phosphate + ADP. It functions in the pathway amino-acid biosynthesis; L-arginine biosynthesis; N(2)-acetyl-L-ornithine from L-glutamate: step 2/4. Functionally, catalyzes the ATP-dependent phosphorylation of N-acetyl-L-glutamate. The sequence is that of Acetylglutamate kinase from Marinobacter nauticus (strain ATCC 700491 / DSM 11845 / VT8) (Marinobacter aquaeolei).